A 94-amino-acid polypeptide reads, in one-letter code: MANAHDIIKRPVITERSVNQMAEKKYTFEVDVKASKTQIKDAVEAIFGVKVEKINTLISKPKAKRVGRHAGYTARRKKAVVTLTADSKELDYLG.

Belongs to the universal ribosomal protein uL23 family. As to quaternary structure, part of the 50S ribosomal subunit. Contacts protein L29, and trigger factor when it is bound to the ribosome.

One of the early assembly proteins it binds 23S rRNA. One of the proteins that surrounds the polypeptide exit tunnel on the outside of the ribosome. Forms the main docking site for trigger factor binding to the ribosome. The chain is Large ribosomal subunit protein uL23 from Exiguobacterium sibiricum (strain DSM 17290 / CCUG 55495 / CIP 109462 / JCM 13490 / 255-15).